A 520-amino-acid polypeptide reads, in one-letter code: Glucose starvation modulator protein 1 (520 aa).

A DNA-binding region (zn(2)-C6 fungal-type) is located at residues Cys-20 to Cys-48. Disordered stretches follow at residues Ala-63–Arg-104 and Pro-194–Met-213. Over residues Ser-74–Leu-85 the composition is skewed to low complexity. A compositionally biased stretch (polar residues) spans Ile-90–Arg-104. In terms of domain architecture, PAS spans Asp-376–Gly-445.

This sequence belongs to the ERT1/acuK family.

It localises to the nucleus. Functionally, transcription factor which regulates nonfermentable carbon utilization. The sequence is that of Glucose starvation modulator protein 1 (GSM1) from Meyerozyma guilliermondii (strain ATCC 6260 / CBS 566 / DSM 6381 / JCM 1539 / NBRC 10279 / NRRL Y-324) (Yeast).